A 602-amino-acid chain; its full sequence is Leucine-rich repeat-containing protein 40 (602 aa).

The residue at position 71 (S71) is a Phosphoserine. 20 LRR repeats span residues D83–L104, A106–L127, N129–L150, N152–L173, N175–L196, S198–M219, R221–M242, S244–S265, L266–K286, S290–L311, S313–H335, L336–K356, T400–A421, I426–L447, M450–Q472, K473–L494, R496–I517, T519–M540, N543–C564, and N566–M586.

This chain is Leucine-rich repeat-containing protein 40 (LRRC40), found in Homo sapiens (Human).